The following is a 528-amino-acid chain: Extracellular serine/threonine protein CG31145 (528 aa).

Over 1–12 (MAVLRTMKLKER) the chain is Cytoplasmic. The propeptide occupies 1-76 (MAVLRTMKLK…LHEFKRKFLQ (76 aa)). Residues 13 to 33 (LVISLGATLVLLTLLLIVDVQ) form a helical membrane-spanning segment. Residues 34–528 (MDFGVANRHL…VDGSETDVSS (495 aa)) are Lumenal-facing. The segment at 77–130 (KSNASGSKEASTQAGASQSGGATSGQDAAAGASGGAAGPGTSRSTSTRKPTPHD) is disordered. N-linked (GlcNAc...) asparagine glycosylation is present at asparagine 79. Positions 86–107 (ASTQAGASQSGGATSGQDAAAG) are enriched in low complexity. N-linked (GlcNAc...) asparagine glycosylation is present at asparagine 173. Residues glutamine 220, lysine 236, and glutamate 257 each coordinate ATP. Glutamate 257 contributes to the Mn(2+) binding site. Asparagine 286 carries N-linked (GlcNAc...) asparagine glycosylation. Disulfide bonds link cysteine 312/cysteine 328 and cysteine 317/cysteine 321. 339 to 342 (AAFL) is a binding site for ATP. 2 disulfides stabilise this stretch: cysteine 376-cysteine 450 and cysteine 451-cysteine 510. Aspartate 408 is an active-site residue. Glutamate 413 lines the ATP pocket. A glycan (N-linked (GlcNAc...) asparagine) is linked at asparagine 420. Position 428 (aspartate 428) interacts with ATP. Aspartate 428 is a Mn(2+) binding site.

The protein belongs to the FAM20 family. Mn(2+) serves as cofactor. In embryos, prominently expressed in midline glia, salivary gland, intestine and dorsal vessel (heart). Not associated with biomineralization.

It localises to the golgi apparatus membrane. Its subcellular location is the secreted. The enzyme catalyses L-seryl-[protein] + ATP = O-phospho-L-seryl-[protein] + ADP + H(+). It catalyses the reaction L-threonyl-[protein] + ATP = O-phospho-L-threonyl-[protein] + ADP + H(+). Functionally, golgi serine/threonine protein kinase that phosphorylates secretory pathway proteins within Ser-x-Glu/pSer motifs. The protein is Extracellular serine/threonine protein CG31145 of Drosophila melanogaster (Fruit fly).